Consider the following 224-residue polypeptide: LexA repressor (224 aa).

The H-T-H motif DNA-binding region spans 31–51; it reads RAEIAAELGFKSANAAEEHLQ. Catalysis depends on for autocatalytic cleavage activity residues Ser142 and Lys179.

The protein belongs to the peptidase S24 family. In terms of assembly, homodimer.

It catalyses the reaction Hydrolysis of Ala-|-Gly bond in repressor LexA.. In terms of biological role, represses a number of genes involved in the response to DNA damage (SOS response), including recA and lexA. In the presence of single-stranded DNA, RecA interacts with LexA causing an autocatalytic cleavage which disrupts the DNA-binding part of LexA, leading to derepression of the SOS regulon and eventually DNA repair. This Acidovorax ebreus (strain TPSY) (Diaphorobacter sp. (strain TPSY)) protein is LexA repressor.